Consider the following 187-residue polypeptide: T-cell receptor-associated transmembrane adapter 1 (187 aa).

Residues 1 to 7 (MSGSSGC) lie on the Extracellular side of the membrane. Residues 8 to 28 (PFFLWGLLAFLGLALVISLIF) traverse the membrane as a helical; Signal-anchor for type III membrane protein segment. Over 29 to 187 (NISHYVEKQR…LIRAKREPVI (159 aa)) the chain is Cytoplasmic. S46 is subject to Phosphoserine. At Y80 the chain carries Phosphotyrosine. The interaction with PIK3R1 stretch occupies residues 80–83 (YEQM). The tract at residues 117-138 (SVKGKRRRPRKQNTNVSDRGKD) is disordered.

In terms of assembly, homodimer; disulfide-linked. Interacts with CD3Z. When phosphorylated, interacts with PIK3R1. Post-translationally, phosphorylated on tyrosines upon TCR activation. In terms of tissue distribution, present in T-cells (at protein level).

Its subcellular location is the cell membrane. Functionally, stabilizes the TCR (T-cell antigen receptor)/CD3 complex at the surface of T-cells. This is T-cell receptor-associated transmembrane adapter 1 (Trat1) from Mus musculus (Mouse).